A 164-amino-acid polypeptide reads, in one-letter code: Transcription antitermination protein NusB (164 aa).

Positions lysine 144–serine 164 are disordered. Over residues leucine 149 to serine 164 the composition is skewed to basic and acidic residues.

Belongs to the NusB family.

Its function is as follows. Involved in transcription antitermination. Required for transcription of ribosomal RNA (rRNA) genes. Binds specifically to the boxA antiterminator sequence of the ribosomal RNA (rrn) operons. The chain is Transcription antitermination protein NusB from Chlorobium phaeovibrioides (strain DSM 265 / 1930) (Prosthecochloris vibrioformis (strain DSM 265)).